Reading from the N-terminus, the 602-residue chain is MFS-type efflux transporter pyiT (602 aa).

Positions 1–33 (MEKAKDSLPTTGDPVPSQGTINPVDETGGSASD) are disordered. Helical transmembrane passes span 43–63 (FWFT…EGSV), 123–143 (WLTI…GGAT), 156–176 (GLGS…LLPL), 185–205 (IIFM…GILV), 212–232 (WVFY…FFFL), 251–271 (FFGN…LTYG), and 282–302 (IIVS…FEAS). The N-linked (GlcNAc...) asparagine glycan is linked to Asn317. A run of 6 helical transmembrane segments spans residues 325–345 (IATF…PLYF), 357–377 (GVML…GGAL), 386–406 (NIHF…TILN), 410–430 (SLAV…VPTA), 451–471 (TFAF…AAIF), and 524–544 (LERV…VIFL). Positions 564–585 (IPQTAADNSASRPNTINDTASQ) are enriched in polar residues. The tract at residues 564-602 (IPQTAADNSASRPNTINDTASQAPILKQRRSTNQERETV) is disordered. N-linked (GlcNAc...) asparagine glycosylation occurs at Asn580.

This sequence belongs to the major facilitator superfamily.

Its subcellular location is the cell membrane. MFS-type efflux transporter; part of the gene cluster that mediates the biosynthesis of the mycotoxin pyrichalasin H, a tyrosine-derived cytochalasan that inhibits the growth of rice seedlings, but also inhibits lymphocyte capping and actin polymerization and alters cell morphology. Pyrichalasin H is indicated as the responsible agent for the genus-specific pathogenicity of M.grisea toward crabgrass. PyiT might be involved in the excretion of pyrichalasin H. This is MFS-type efflux transporter pyiT from Pyricularia grisea (Crabgrass-specific blast fungus).